The chain runs to 429 residues: Enolase (429 aa).

Glutamine 163 is a (2R)-2-phosphoglycerate binding site. Residue glutamate 205 is the Proton donor of the active site. Positions 242, 287, and 314 each coordinate Mg(2+). (2R)-2-phosphoglycerate contacts are provided by lysine 339, arginine 368, serine 369, and lysine 390. The Proton acceptor role is filled by lysine 339.

Belongs to the enolase family. The cofactor is Mg(2+).

The protein localises to the cytoplasm. The protein resides in the secreted. It localises to the cell surface. It catalyses the reaction (2R)-2-phosphoglycerate = phosphoenolpyruvate + H2O. It functions in the pathway carbohydrate degradation; glycolysis; pyruvate from D-glyceraldehyde 3-phosphate: step 4/5. Functionally, catalyzes the reversible conversion of 2-phosphoglycerate (2-PG) into phosphoenolpyruvate (PEP). It is essential for the degradation of carbohydrates via glycolysis. The sequence is that of Enolase from Magnetococcus marinus (strain ATCC BAA-1437 / JCM 17883 / MC-1).